The sequence spans 623 residues: ATP-dependent zinc metalloprotease FtsH (623 aa).

At 1 to 7 (MNQSFWR) the chain is on the cytoplasmic side. A helical transmembrane segment spans residues 8-28 (PLFAILLFMLVFHLTNIFFAQ). Residues 29–117 (QGAQVAQISY…EVSALSTETP (89 aa)) lie on the Periplasmic side of the membrane. Residues 118-138 (LLLNALIYVAPWVILIAIWWV) traverse the membrane as a helical segment. Residues 139–623 (GMRSMRSQGP…SLNTAQAPPP (485 aa)) are Cytoplasmic-facing. 214 to 221 (GPPGTGKT) serves as a coordination point for ATP. His435 contributes to the Zn(2+) binding site. The active site involves Glu436. Residues His439 and Asp511 each contribute to the Zn(2+) site.

In the central section; belongs to the AAA ATPase family. It in the C-terminal section; belongs to the peptidase M41 family. As to quaternary structure, homohexamer. Zn(2+) is required as a cofactor.

It is found in the cell inner membrane. Acts as a processive, ATP-dependent zinc metallopeptidase for both cytoplasmic and membrane proteins. Plays a role in the quality control of integral membrane proteins. This is ATP-dependent zinc metalloprotease FtsH from Pelobacter propionicus (strain DSM 2379 / NBRC 103807 / OttBd1).